An 879-amino-acid polypeptide reads, in one-letter code: Translation initiation factor IF-2 (879 aa).

2 disordered regions span residues 45–216 (AGHM…ERKR) and 228–293 (SYEE…EKPV). Basic and acidic residues-rich tracts occupy residues 60-72 (NAAK…DKNS), 83-99 (RKTD…KISP), and 107-163 (AEKK…ERLQ). Residues 164–173 (MEAALQAQMQ) show a composition bias toward low complexity. 3 stretches are compositionally biased toward basic and acidic residues: residues 174–216 (EQER…ERKR), 228–271 (SYEE…ERRN), and 280–291 (RNNDNKKGKFEK). In terms of domain architecture, tr-type G spans 380–549 (VRAPVVTIMG…LIQAEMLELT (170 aa)). The interval 389-396 (GHVDHGKT) is G1. 389–396 (GHVDHGKT) lines the GTP pocket. Residues 414-418 (GITQH) are G2. The interval 435–438 (DTPG) is G3. Residues 435 to 439 (DTPGH) and 489 to 492 (NKMD) contribute to the GTP site. The G4 stretch occupies residues 489–492 (NKMD). Residues 525–527 (SAK) are G5.

Belongs to the TRAFAC class translation factor GTPase superfamily. Classic translation factor GTPase family. IF-2 subfamily.

The protein resides in the cytoplasm. Functionally, one of the essential components for the initiation of protein synthesis. Protects formylmethionyl-tRNA from spontaneous hydrolysis and promotes its binding to the 30S ribosomal subunits. Also involved in the hydrolysis of GTP during the formation of the 70S ribosomal complex. In Dichelobacter nodosus (strain VCS1703A), this protein is Translation initiation factor IF-2.